Consider the following 121-residue polypeptide: Small ribosomal subunit protein uS13 (121 aa).

A disordered region spans residues 90 to 121 (RHRHGLPVRGQHTKNNARTRKGKAVAIAGKKK).

This sequence belongs to the universal ribosomal protein uS13 family. As to quaternary structure, part of the 30S ribosomal subunit. Forms a loose heterodimer with protein S19. Forms two bridges to the 50S subunit in the 70S ribosome.

Its function is as follows. Located at the top of the head of the 30S subunit, it contacts several helices of the 16S rRNA. In the 70S ribosome it contacts the 23S rRNA (bridge B1a) and protein L5 of the 50S subunit (bridge B1b), connecting the 2 subunits; these bridges are implicated in subunit movement. Contacts the tRNAs in the A and P-sites. The sequence is that of Small ribosomal subunit protein uS13 from Limosilactobacillus fermentum (strain NBRC 3956 / LMG 18251) (Lactobacillus fermentum).